Reading from the N-terminus, the 179-residue chain is Large ribosomal subunit protein uL6 (179 aa).

Belongs to the universal ribosomal protein uL6 family. As to quaternary structure, part of the 50S ribosomal subunit.

Its function is as follows. This protein binds to the 23S rRNA, and is important in its secondary structure. It is located near the subunit interface in the base of the L7/L12 stalk, and near the tRNA binding site of the peptidyltransferase center. This chain is Large ribosomal subunit protein uL6, found in Pseudomonas savastanoi pv. phaseolicola (strain 1448A / Race 6) (Pseudomonas syringae pv. phaseolicola (strain 1448A / Race 6)).